Consider the following 534-residue polypeptide: Serine protease vicPb (534 aa).

Positions 1–17 (MLRYLLIPILYLQVVLG) are cleaved as a signal peptide. N-linked (GlcNAc...) asparagine glycosylation is found at asparagine 34, asparagine 65, and asparagine 126. Residue serine 174 is the Charge relay system of the active site. Residues asparagine 297, asparagine 335, asparagine 352, asparagine 415, and asparagine 437 are each glycosylated (N-linked (GlcNAc...) asparagine). Residue aspartate 451 is the Charge relay system of the active site.

This sequence belongs to the peptidase S28 family.

It functions in the pathway mycotoxin biosynthesis. Functionally, serine protease, part of the gene cluster that mediates the biosynthesis of the secondary metabolite victorin, the molecular basis for Victoria blight of oats. Within the pathway, vicPa and vicPb are probably involved in the processing of the vicA1 and vicA2 precursors. The pathway starts with the processing of the precursor vicA1 by several endopeptidases including kexin proteases as well as the cluster-specific S28 family peptidases vicPa and vicPb to produce 7 identical copies of the hexapeptide Gly-Leu-Lys-Leu-Ala-Phe. After being excised from the precursor peptide, the core peptides are cyclized and modified post-translationally by enzymes encoded within the gene cluster. The ustYa family oxidase vicYb is required for the formation of the macrocycle in victorin and the copper amine oxidases (CAOs) vicK1 and vicK2 are responsible for converting victorin to the active form by oxidizing the N-terminal glycyl residue in the peptides to glyoxylate. Relaxed substrate specificity of enzymes in the victorin biosynthetic pathway results in a metabolic grid that produces a set of analogs including victorinines B, C, E or HV-toxin M. This chain is Serine protease vicPb, found in Bipolaris victoriae (strain FI3) (Victoria blight of oats agent).